A 38-amino-acid chain; its full sequence is Photosystem II reaction center protein L (38 aa).

A helical transmembrane segment spans residues 17 to 37 (SLFWGLLLIFVLAVLFSSYFF).

The protein belongs to the PsbL family. PSII is composed of 1 copy each of membrane proteins PsbA, PsbB, PsbC, PsbD, PsbE, PsbF, PsbH, PsbI, PsbJ, PsbK, PsbL, PsbM, PsbT, PsbX, PsbY, PsbZ, Psb30/Ycf12, at least 3 peripheral proteins of the oxygen-evolving complex and a large number of cofactors. It forms dimeric complexes.

It localises to the plastid. Its subcellular location is the chloroplast thylakoid membrane. Functionally, one of the components of the core complex of photosystem II (PSII). PSII is a light-driven water:plastoquinone oxidoreductase that uses light energy to abstract electrons from H(2)O, generating O(2) and a proton gradient subsequently used for ATP formation. It consists of a core antenna complex that captures photons, and an electron transfer chain that converts photonic excitation into a charge separation. This subunit is found at the monomer-monomer interface and is required for correct PSII assembly and/or dimerization. The polypeptide is Photosystem II reaction center protein L (Porphyra purpurea (Red seaweed)).